Here is a 746-residue protein sequence, read N- to C-terminus: Exostosin-1 (746 aa).

Residues 1–5 (MQAKK) lie on the Cytoplasmic side of the membrane. The helical; Signal-anchor for type II membrane protein transmembrane segment at 6-26 (RYFILLSAGSCLALLFYFGGV) threads the bilayer. Residues 27–746 (QFRASRSHSR…RKKYRDIERL (720 aa)) are Lumenal-facing. The N-linked (GlcNAc...) asparagine glycan is linked to N89. Disulfide bonds link C98–C103 and C109–C152. Residues L166 and Y203 each contribute to the a protein site. UDP contacts are provided by K267, K269, Y271, and R280. The cysteines at positions 298 and 312 are disulfide-linked. H300 is a binding site for a protein. UDP is bound by residues Y319 and Y324. N-linked (GlcNAc...) asparagine glycosylation is present at N330. Cystine bridges form between C334–C355 and C652–C704. 2 residues coordinate UDP: R346 and E349.

It belongs to the glycosyltransferase 47 family. As to quaternary structure, part of the heparan sulfate polymerase, a dimeric complex composed of EXT1 and EXT2. Could also form homooligomeric complexes. Interacts with NDST1. In terms of processing, N-glycosylated.

The protein localises to the golgi apparatus membrane. It is found in the golgi apparatus. Its subcellular location is the cis-Golgi network membrane. The protein resides in the endoplasmic reticulum membrane. It catalyses the reaction 3-O-{alpha-D-GlcNAc-[(1-&gt;4)-beta-D-GlcA-(1-&gt;4)-alpha-D-GlcNAc](n)-(1-&gt;4)-beta-D-GlcA-(1-&gt;3)-beta-D-Gal-(1-&gt;3)-beta-D-Gal-(1-&gt;4)-beta-D-Xyl}-L-seryl-[protein] + UDP-alpha-D-glucuronate = 3-O-{[(1-&gt;4)-beta-D-GlcA-(1-&gt;4)-alpha-D-GlcNAc](n+1)-(1-&gt;4)-beta-D-GlcA-(1-&gt;3)-beta-D-Gal-(1-&gt;3)-beta-D-Gal-(1-&gt;4)-beta-D-Xyl}-L-seryl-[protein] + UDP + H(+). Its pathway is protein modification; protein glycosylation. In terms of biological role, glycosyltransferase forming with EXT2 the heterodimeric heparan sulfate polymerase which catalyzes the elongation of the heparan sulfate glycan backbone. Glycan backbone extension consists in the alternating transfer of (1-&gt;4)-beta-D-GlcA and (1-&gt;4)-alpha-D-GlcNAc residues from their respective UDP-sugar donors. Both EXT1 and EXT2 are required for the full activity of the polymerase since EXT1 bears the N-acetylglucosaminyl-proteoglycan 4-beta-glucuronosyltransferase activity within the complex while EXT2 carries the glucuronosyl-N-acetylglucosaminyl-proteoglycan 4-alpha-N-acetylglucosaminyltransferase activity. Heparan sulfate proteoglycans are ubiquitous components of the extracellular matrix and play an important role in tissue homeostasis and signaling. The polypeptide is Exostosin-1 (Cricetulus griseus (Chinese hamster)).